The primary structure comprises 133 residues: Small ribosomal subunit protein uS9 (133 aa).

The span at 97–113 (SKQELKSHGFLTRDPRK) shows a compositional bias: basic and acidic residues. The segment at 97–133 (SKQELKSHGFLTRDPRKKERKKYGHKKARKSFQFSKR) is disordered. A compositionally biased stretch (basic residues) spans 114–133 (KERKKYGHKKARKSFQFSKR).

It belongs to the universal ribosomal protein uS9 family.

The sequence is that of Small ribosomal subunit protein uS9 from Chlamydia abortus (strain DSM 27085 / S26/3) (Chlamydophila abortus).